A 210-amino-acid polypeptide reads, in one-letter code: Large ribosomal subunit protein uL4 (210 aa).

Polar residues predominate over residues 41-52 (QTNARQGTASTK). The interval 41–71 (QTNARQGTASTKTRAEVRGGGRKPWRQKGTG) is disordered. A compositionally biased stretch (basic residues) spans 60–71 (GGRKPWRQKGTG).

This sequence belongs to the universal ribosomal protein uL4 family. In terms of assembly, part of the 50S ribosomal subunit.

One of the primary rRNA binding proteins, this protein initially binds near the 5'-end of the 23S rRNA. It is important during the early stages of 50S assembly. It makes multiple contacts with different domains of the 23S rRNA in the assembled 50S subunit and ribosome. Its function is as follows. Forms part of the polypeptide exit tunnel. This chain is Large ribosomal subunit protein uL4, found in Nostoc sp. (strain PCC 7120 / SAG 25.82 / UTEX 2576).